Here is a 247-residue protein sequence, read N- to C-terminus: Terpene cyclase adrI (247 aa).

The next 5 helical transmembrane spans lie at 20 to 40, 51 to 71, 76 to 96, 112 to 132, and 141 to 161; these read VAEF…FSML, TGIF…FIYP, HWEG…FFII, NLYF…YSFA, and FFYG…AQIL. N-linked (GlcNAc...) asparagine glycosylation is present at N164. 2 consecutive transmembrane segments (helical) span residues 179–199 and 205–225; these read FGGF…GPWF and KFYI…YYVI.

The protein belongs to the paxB family.

Its subcellular location is the membrane. It participates in secondary metabolite biosynthesis; terpenoid biosynthesis. Its function is as follows. Terpene cyclase; part of the gene cluster that mediates the biosynthesis of andrastins, meroterpenoid compounds that exhibit inhibitory activity against ras farnesyltransferase, suggesting that they could be promising leads for antitumor agents. The first step of the pathway is the synthesis of 3,5-dimethylorsellinic acid (DMOA) by the polyketide synthase adrD via condensation of one acetyl-CoA starter unit with 3 malonyl-CoA units and 2 methylations. DMAO is then converted to farnesyl-DMAO by the prenyltransferase adrG. The methyltransferase adrK catalyzes the methylation of the carboxyl group of farnesyl-DMAO to farnesyl-DMAO methyl ester which is further converted to epoxyfarnesyl-DMAO methyl ester by the FAD-dependent monooxygenase adrH. The terpene cyclase adrI then catalyzes the carbon skeletal rearrangement to generate the andrastin E, the first compound in the pathway having the andrastin scaffold, with the tetracyclic ring system. The post-cyclization tailoring enzymes adrF, adrE, adrJ, and adrA, are involved in the conversion of andrastin E into andrastin A. The short chain dehydrogenase adrF is responsible for the oxidation of the C-3 a hydroxyl group of andrastin E to yield the corresponding ketone, andrastin D. The ketoreductase adrE stereoselectively reduces the carbonyl moiety to reverse the stereochemistry of the C-3 position to yield andrastin F. The acetyltransferase adrJ is the acetyltransferase that attaches the acetyl group to the C-3 hydroxyl group of andrastin F to yield andrastin C. Finally, the cytochrome P450 monooxygenase adrA catalyzes two sequential oxidation reactions of the C-23 methyl group, to generate the corresponding alcohol andrastin B, and aldehyde andrastin A. In Penicillium rubens (strain ATCC 28089 / DSM 1075 / NRRL 1951 / Wisconsin 54-1255) (Penicillium chrysogenum), this protein is Terpene cyclase adrI.